The primary structure comprises 98 residues: Acylphosphatase (98 aa).

Residues 12-98 (TYYVRVRGVV…DKRFERFQQH (87 aa)) enclose the Acylphosphatase-like domain. Catalysis depends on residues Arg27 and Asn45.

The protein belongs to the acylphosphatase family.

The catalysed reaction is an acyl phosphate + H2O = a carboxylate + phosphate + H(+). The polypeptide is Acylphosphatase (acyP) (Burkholderia thailandensis (strain ATCC 700388 / DSM 13276 / CCUG 48851 / CIP 106301 / E264)).